The chain runs to 183 residues: Ras-like protein (183 aa).

10–17 lines the GTP pocket; the sequence is GAGGVGKS. The Effector region motif lies at 32 to 40; that stretch reads YDPTIEDSY. GTP contacts are provided by residues 57–61 and 116–119; these read DTAGQ and NKCD.

Belongs to the small GTPase superfamily. Ras family.

Its subcellular location is the cell membrane. The catalysed reaction is GTP + H2O = GDP + phosphate + H(+). Alternates between an inactive form bound to GDP and an active form bound to GTP. Activated by a guanine nucleotide-exchange factor (GEF) and inactivated by a GTPase-activating protein (GAP). Functionally, ras proteins bind GDP/GTP and possess intrinsic GTPase activity. The chain is Ras-like protein from Carassius auratus (Goldfish).